The chain runs to 338 residues: Fructose-1,6-bisphosphatase class 1 (338 aa).

Mg(2+) is bound by residues Glu91, Asp113, Leu115, and Asp116. Substrate is bound by residues 116–119, Asn211, Tyr244, and Lys277; that span reads DGSS. Mg(2+) is bound at residue Glu283.

Belongs to the FBPase class 1 family. In terms of assembly, homotetramer. It depends on Mg(2+) as a cofactor.

Its subcellular location is the cytoplasm. The enzyme catalyses beta-D-fructose 1,6-bisphosphate + H2O = beta-D-fructose 6-phosphate + phosphate. Its pathway is carbohydrate biosynthesis; gluconeogenesis. In Oleidesulfovibrio alaskensis (strain ATCC BAA-1058 / DSM 17464 / G20) (Desulfovibrio alaskensis), this protein is Fructose-1,6-bisphosphatase class 1.